A 77-amino-acid chain; its full sequence is MSSIEERVNKIIVEQLGVKPEDVKSEASFVEDLGADSLDTVELVMALEEEFETEIPDEEAEKISTVQSAVDYIKAHS.

One can recognise a Carrier domain in the interval 2–77; sequence SSIEERVNKI…SAVDYIKAHS (76 aa). Residue S37 is modified to O-(pantetheine 4'-phosphoryl)serine.

This sequence belongs to the acyl carrier protein (ACP) family. In terms of processing, 4'-phosphopantetheine is transferred from CoA to a specific serine of apo-ACP by AcpS. This modification is essential for activity because fatty acids are bound in thioester linkage to the sulfhydryl of the prosthetic group.

It is found in the cytoplasm. Its pathway is lipid metabolism; fatty acid biosynthesis. Functionally, carrier of the growing fatty acid chain in fatty acid biosynthesis. This is Acyl carrier protein from Alcanivorax borkumensis (strain ATCC 700651 / DSM 11573 / NCIMB 13689 / SK2).